We begin with the raw amino-acid sequence, 215 residues long: Nascent polypeptide-associated complex subunit alpha (215 aa).

The disordered stretch occupies residues 1 to 81 (MPGEATETVP…SEKKARKAMS (81 aa)). Over residues 9 to 28 (VPATEQELPQPQAETGSGTE) the composition is skewed to polar residues. Positions 29–42 (SDSDESVPELEEQD) are enriched in acidic residues. Ser43 carries the phosphoserine; by ILK1 modification. Residues 44–57 (TQATTQQAQLAAAA) show a composition bias toward low complexity. Positions 69-80 (QSRSEKKARKAM) are required for DNA-binding. The NAC-A/B domain occupies 70–135 (SRSEKKARKA…AKIEDLSQQA (66 aa)). The RNA/DNA-binding stretch occupies residues 93–108 (RVTIRKSKNILFVITK). Ser132 carries the post-translational modification Phosphoserine. Position 142 is an N6-acetyllysine; alternate (Lys142). Lys142 participates in a covalent cross-link: Glycyl lysine isopeptide (Lys-Gly) (interchain with G-Cter in SUMO2); alternate. Thr159 bears the Phosphothreonine; by GSK3-beta mark. Thr161 carries the post-translational modification Phosphothreonine. 4 positions are modified to phosphoserine: Ser166, Ser186, Ser191, and Ser203. In terms of domain architecture, UBA spans 176–213 (VEVKDIELVMSQANVSRAKAVRALKNNSNDIVNAIMEL).

The protein belongs to the NAC-alpha family. Part of the nascent polypeptide-associated complex (NAC), which is a heterodimer of NACA and BTF3 (via NAC-A/B domains). NAC associates with ribosomes through the BTF3/NACB subunit and contacts the ribosomal protein L23, which is positioned near the exiting site. Both subunits can contact nascent polypeptide chains. NACA may also form homodimers, and only this form binds DNA. Interacts with TBP and JUN. Phosphorylation of Ser-43 by ILK during cell adhesion may promote nuclear localization. Phosphorylation of Thr-159 by GSK3B may promote proteasome mediated degradation.

It localises to the cytoplasm. Its subcellular location is the nucleus. In terms of biological role, prevents inappropriate targeting of non-secretory polypeptides to the endoplasmic reticulum (ER). Binds to nascent polypeptide chains as they emerge from the ribosome and blocks their interaction with the signal recognition particle (SRP), which normally targets nascent secretory peptides to the ER. Also reduces the inherent affinity of ribosomes for protein translocation sites in the ER membrane (M sites). May act as a specific coactivator for JUN, binding to DNA and stabilizing the interaction of JUN homodimers with target gene promoters. This chain is Nascent polypeptide-associated complex subunit alpha (NACA), found in Pongo abelii (Sumatran orangutan).